The chain runs to 167 residues: uncharacterized protein (167 aa).

A signal peptide spans 1–23 (MKRLHKRFLLATFCALFTATLQA). The cysteines at positions 39 and 77 are disulfide-linked.

Belongs to the fimbrial protein family.

It localises to the fimbrium. This is an uncharacterized protein from Escherichia coli (strain K12).